Consider the following 76-residue polypeptide: Tautomerase PptA (76 aa).

Pro2 functions as the Proton acceptor; via imino nitrogen in the catalytic mechanism.

This sequence belongs to the 4-oxalocrotonate tautomerase family. PptA subfamily. As to quaternary structure, homodimer.

Its subcellular location is the cytoplasm. The protein is Tautomerase PptA of Pectobacterium carotovorum subsp. carotovorum (strain PC1).